Consider the following 283-residue polypeptide: Myeloid differentiation primary response protein MyD88-B (283 aa).

A Death domain is found at 27–105; that stretch reads RLCLYLNPNA…DILTDLAPLI (79 aa). An intermediate domain region spans residues 106–143; it reads EADCKKYLEKKHGPLPLQDDNVDSSEQYRITKSDDPYG. Residues 147–281 enclose the TIR domain; sequence ETFDAFICCC…WFWDKLAKAL (135 aa).

The protein resides in the cytoplasm. Its function is as follows. Adapter protein involved in the Toll-like receptor and IL-1 receptor signaling pathway in the innate immune response. Activates expression of target genes in the Spemann organizer region during early embryonic development. Is required for normal axis formation. The sequence is that of Myeloid differentiation primary response protein MyD88-B (myd88-b) from Xenopus laevis (African clawed frog).